A 341-amino-acid chain; its full sequence is Putative amino-acid ABC transporter-binding protein YhdW (341 aa).

A signal peptide spans 1–19; the sequence is MKKMMIATLAAASVLLAVA.

Belongs to the bacterial solute-binding protein 3 family.

Its subcellular location is the periplasm. Probably part of the binding-protein-dependent transport system YdhWXYZ for an amino acid. In Escherichia coli (strain K12), this protein is Putative amino-acid ABC transporter-binding protein YhdW (yhdW).